The sequence spans 671 residues: Putative glycoside hydrolase BT_3595 (671 aa).

The signal sequence occupies residues 1–24 (MITGIISILCYLQCFGTLSASVTA).

This sequence belongs to the glycoside hydrolase-like 3 (GHL3) family.

In Bacteroides thetaiotaomicron (strain ATCC 29148 / DSM 2079 / JCM 5827 / CCUG 10774 / NCTC 10582 / VPI-5482 / E50), this protein is Putative glycoside hydrolase BT_3595.